The chain runs to 1002 residues: Vacuolar protein sorting-associated protein 18 homolog (1002 aa).

A Phosphoserine modification is found at serine 344. One copy of the CHCR repeat lies at 650–804 (LMAQGSRLEV…DIKGTNDVKK (155 aa)). A coiled-coil region spans residues 827–880 (FEKIDNFKEAICDALRDYNQRIQELQREMAETTEQTDRVTAELQQLRQHSLTVE). The RING-type; degenerate zinc finger occupies 885 to 924 (CEICEMMLLVKPFFIFICGHKFHSDCLEKHVVPLLTKEQC).

Belongs to the VPS18 family. As to quaternary structure, component of the class C core vacuole/endosome tethering (CORVET) complex composed of at least Vps8, dor/Vps18, car/Vps33A and Vps16A; unlike in other species, Vps11 is not part of the Drosophila complex. Due to the reduced number of components the Drosophila CORVET complex is often referred to as the miniCORVET complex. Interacts with car/Vps33A. Interacts with ema. Component of the homotypic fusion and vacuole protein sorting (HOPS) complex, composed of Vps16A, car/Vps33A, dor/Vps18, Vps39, Vps11 and lt/Vps41. The tethering complex core made up of Vps16A, car/Vps33A and dor/Vps18 and shared by both HOPS and CORVET, preferentially associates with CORVET-specific Vps8 over HOPS-specific lt/Vps41. Interacts with Syx17 (via SNARE domain); the interaction may involve multiple components of the HOPS complex and may promote assembly of the Syx17-Snap29-Vamp7 trans-SNARE complex.

It is found in the early endosome. The protein localises to the late endosome membrane. Its subcellular location is the lysosome membrane. It localises to the cytoplasmic vesicle. The protein resides in the autophagosome. Core component of the class C core vacuole/endosome tethering (CORVET) and the homotypic fusion and vacuole protein sorting (HOPS) tethering complexes involved in endo-lysosomal vesicle trafficking and lysosome biogenesis. The CORVET complex facilitates docking and fusion of endosomal vesicles during endosome maturation, acts upstream of HOPS, but is not involved in autophagic flux. The CORVET complex may cooperate with the early endosomal tether Rbsn-5 to mediate endosomal fusion. The HOPS complex facilitates docking and fusion of lysosomes with late endosomes and several other types of vesicles. The HOPS complex is also involved in autophagy and crinophagy (the elimination of unused secretory granules through their fusion with lysosomes). The HOPS complex mediates autophagocitic flux, probably by binding autophagosome-associated Syx17/syntaxin 17, promoting assembly of the trans-SNARE complex and instigating autophagosome-lysosome fusion. Independent of Syx17/syntaxin 17, HOPS is involved in biosynthetic transport to lysosomes and lysosome-related organelles such as eye-pigment granules. Required for endocytic degradation of boss/bride of sevenless and N/Notch in developing ommatidia. Required for autophagocytosis-dependent remodeling of myofibrils and transverse-tubules (T-tubules) during metamorphosis. In larval neuromuscular junctions, essential for endosomal sorting that traffics old or dysfunctional synaptic vesicle proteins through a degradative endolysosomal route. Required to maintain normal levels of rush, which functions in endosome formation and trafficking. This is Vacuolar protein sorting-associated protein 18 homolog from Drosophila melanogaster (Fruit fly).